The primary structure comprises 197 residues: MLTLVRQSLVVTLLLAALLCGAYPVLVTGAAQALLPGKANGSPVMVDGRVTGSDLIGQHFTGAGYFHGRPSAAGEDGYDASASGGSNLGPTSRTLAEAMQARADALRAENPDWKAPLPPDMVTASASGLDPHVSPQGAAMQVARVAAARGLPIKSVARLVEEHVEGPQLGLFGEPHVNVLRLNLALDALAGGRAEGN.

A helical transmembrane segment spans residues 9–29 (LVVTLLLAALLCGAYPVLVTG).

This sequence belongs to the KdpC family. In terms of assembly, the system is composed of three essential subunits: KdpA, KdpB and KdpC.

It localises to the cell inner membrane. Part of the high-affinity ATP-driven potassium transport (or Kdp) system, which catalyzes the hydrolysis of ATP coupled with the electrogenic transport of potassium into the cytoplasm. This subunit acts as a catalytic chaperone that increases the ATP-binding affinity of the ATP-hydrolyzing subunit KdpB by the formation of a transient KdpB/KdpC/ATP ternary complex. The sequence is that of Potassium-transporting ATPase KdpC subunit from Nitratidesulfovibrio vulgaris (strain DSM 19637 / Miyazaki F) (Desulfovibrio vulgaris).